The sequence spans 403 residues: Exodeoxyribonuclease 7 large subunit (403 aa).

This sequence belongs to the XseA family. As to quaternary structure, heterooligomer composed of large and small subunits.

The protein resides in the cytoplasm. It catalyses the reaction Exonucleolytic cleavage in either 5'- to 3'- or 3'- to 5'-direction to yield nucleoside 5'-phosphates.. Bidirectionally degrades single-stranded DNA into large acid-insoluble oligonucleotides, which are then degraded further into small acid-soluble oligonucleotides. In Streptomyces griseus subsp. griseus (strain JCM 4626 / CBS 651.72 / NBRC 13350 / KCC S-0626 / ISP 5235), this protein is Exodeoxyribonuclease 7 large subunit.